The following is a 1004-amino-acid chain: Unconventional myosin-Id (1004 aa).

Positions 9–695 constitute a Myosin motor domain; the sequence is FGKADFVLLD…TIFSLEEQRA (687 aa). 102–109 is a binding site for ATP; sequence GESGAGKT. The interval 572 to 594 is actin-binding; the sequence is MISLVEKLASKEPYYVRCIKPND. 2 IQ domains span residues 699-719 and 721-741; these read KRIVLFLQKVWRGTLARMRYR and MRAALIIIRAYRRYKVKSYIR. Residues 812 to 1003 form the TH1 domain; the sequence is GQRADLGLQR…RSGYILSVPG (192 aa).

The protein belongs to the TRAFAC class myosin-kinesin ATPase superfamily. Myosin family. Interacts (via the two IQ motifs) with calmodulin. Interacts with F-actin.

Its subcellular location is the cytoplasm. The protein resides in the perikaryon. The protein localises to the cell projection. It localises to the dendrite. It is found in the early endosome. Its subcellular location is the cell cortex. In terms of biological role, unconventional myosin that functions as actin-based motor protein with ATPase activity. Plays a role in the formation of Kupffer's vesicle, an organ that functions as a left-right organizer during embryogenesis. Plays a role in vesicular trafficking events that are required for normal lumen expansion of Kupffer's vesicle. Required for normal orientation of cilia in Kupffer's vesicle, and thus for normal, unidirectional circular flow and normal angular flow velocity, which then mediates asymmetric gene expression and left-right asymmetric development. Plays a role in endosomal protein trafficking, and especially in the transfer of cargo proteins from early to recycling endosomes. Required for normal planar cell polarity in ciliated cells, for normal rotational polarity of cilia, and for coordinated, unidirectional ciliary movement. The sequence is that of Unconventional myosin-Id (myo1d) from Danio rerio (Zebrafish).